Consider the following 203-residue polypeptide: MGLEVQRPLMEAWYMDDSAEDQRMPHHRNPPEYVSLKKLAELGILHWVLDADNYETDPDLKHIRKERGYSYEDFVDVSPEALPNYETKIKNFYEEHIHTDEEIRYCLDGSGYFDVRDPEDRWIRIWVHKGDMIVLPAGCYHRFSLDANNYLKAMRLFVGEPIWTPYNRPQDEHPVRKEYINLFLKPHLDKSDLSLATQNAETV.

Residues His-96, His-98, Glu-102, and His-141 each contribute to the Fe(2+) site. Ni(2+)-binding residues include His-96, His-98, Glu-102, and His-141.

Belongs to the acireductone dioxygenase (ARD) family. The cofactor is Fe(2+). Ni(2+) serves as cofactor.

The protein resides in the cytoplasm. The protein localises to the nucleus. It carries out the reaction 1,2-dihydroxy-5-(methylsulfanyl)pent-1-en-3-one + O2 = 4-methylsulfanyl-2-oxobutanoate + formate + 2 H(+). It catalyses the reaction 1,2-dihydroxy-5-(methylsulfanyl)pent-1-en-3-one + O2 = 3-(methylsulfanyl)propanoate + CO + formate + 2 H(+). It participates in amino-acid biosynthesis; L-methionine biosynthesis via salvage pathway; L-methionine from S-methyl-5-thio-alpha-D-ribose 1-phosphate: step 5/6. Functionally, catalyzes 2 different reactions between oxygen and the acireductone 1,2-dihydroxy-3-keto-5-methylthiopentene (DHK-MTPene) depending upon the metal bound in the active site. Fe-containing acireductone dioxygenase (Fe-ARD) produces formate and 2-keto-4-methylthiobutyrate (KMTB), the alpha-ketoacid precursor of methionine in the methionine recycle pathway. Ni-containing acireductone dioxygenase (Ni-ARD) produces methylthiopropionate, carbon monoxide and formate, and does not lie on the methionine recycle pathway. In Physcomitrium patens (Spreading-leaved earth moss), this protein is Acireductone dioxygenase 3.